The primary structure comprises 390 residues: Succinate--CoA ligase [ADP-forming] subunit beta (390 aa).

The ATP-grasp domain maps to 9 to 245 (KHLLKKYNIP…TTQEDEHETM (237 aa)). ATP is bound by residues Lys46, 53-55 (GRG), Glu99, Ser102, and Glu107. The Mg(2+) site is built by Asn200 and Asp214. Substrate-binding positions include Asn265 and 322–324 (GIV).

It belongs to the succinate/malate CoA ligase beta subunit family. As to quaternary structure, heterotetramer of two alpha and two beta subunits. The cofactor is Mg(2+).

It catalyses the reaction succinate + ATP + CoA = succinyl-CoA + ADP + phosphate. The enzyme catalyses GTP + succinate + CoA = succinyl-CoA + GDP + phosphate. Its pathway is carbohydrate metabolism; tricarboxylic acid cycle; succinate from succinyl-CoA (ligase route): step 1/1. Functionally, succinyl-CoA synthetase functions in the citric acid cycle (TCA), coupling the hydrolysis of succinyl-CoA to the synthesis of either ATP or GTP and thus represents the only step of substrate-level phosphorylation in the TCA. The beta subunit provides nucleotide specificity of the enzyme and binds the substrate succinate, while the binding sites for coenzyme A and phosphate are found in the alpha subunit. The chain is Succinate--CoA ligase [ADP-forming] subunit beta from Coxiella burnetii (strain CbuK_Q154) (Coxiella burnetii (strain Q154)).